The primary structure comprises 305 residues: Acetaldehyde dehydrogenase (305 aa).

12–15 (SGNI) provides a ligand contact to NAD(+). Cys-127 (acyl-thioester intermediate) is an active-site residue. Residues 158-166 (SAGPGTRAN) and Asn-277 contribute to the NAD(+) site.

This sequence belongs to the acetaldehyde dehydrogenase family.

It carries out the reaction acetaldehyde + NAD(+) + CoA = acetyl-CoA + NADH + H(+). The chain is Acetaldehyde dehydrogenase from Mycolicibacterium paratuberculosis (strain ATCC BAA-968 / K-10) (Mycobacterium paratuberculosis).